The primary structure comprises 915 residues: WD repeat-containing protein 44 (915 aa).

Over residues 1–14 (MASESDTEEFYDAP) the composition is skewed to acidic residues. Residues 1-24 (MASESDTEEFYDAPEDVHLGTGYP) are disordered. The residue at position 2 (Ala-2) is an N-acetylalanine. The binding activity stretch occupies residues 2-173 (ASESDTEEFY…SSGEQLDASG (172 aa)). A Phosphoserine modification is found at Ser-3. The FFAT-like motif motif lies at 9–15 (EFYDAPE). Position 11 is a phosphotyrosine (Tyr-11). 6 positions are modified to phosphoserine: Ser-27, Ser-50, Ser-66, Ser-71, Ser-81, and Ser-126. 3 disordered regions span residues 79-102 (DDSL…VAGT), 117-174 (LQQD…ASGL), and 208-282 (VEEV…PKEN). The stretch at 114–139 (EHELQQDSEKAESQNVAEESELETQK) forms a coiled coil. The span at 146–155 (TCEKSEKTVD) shows a compositional bias: basic and acidic residues. 2 positions are modified to phosphothreonine: Thr-161 and Thr-221. The interval 213–259 (PAKPPRHLTPEPDIVASTKKPVPARPPPPTNFPPPRPPPPSRPAPPP) is important for interaction with ARHGAP26 AND ARHGAP10. The segment covering 235–258 (PARPPPPTNFPPPRPPPPSRPAPP) has biased composition (pro residues). Residue Ser-264 is modified to Phosphoserine. Residues 264–280 (SELEFEALKTPDLDVPK) are compositionally biased toward basic and acidic residues. A Phosphothreonine modification is found at Thr-273. The interval 336–349 (VMGPQRPRSNSGRE) is important for interaction with RAB11A. Phosphoserine occurs at positions 344 and 346. Phosphothreonine occurs at positions 351 and 403. 2 disordered regions span residues 399–425 (SNDA…RLKQ) and 461–481 (DEVF…GMPY). A phosphoserine mark is found at Ser-405, Ser-472, Ser-473, and Ser-474. A compositionally biased stretch (acidic residues) spans 469-478 (DDPSSSDDEG). Tyr-481 is subject to Phosphotyrosine. A WD 1 repeat occupies 511-550 (EHMGAVWTMKFSHCGRLLASAGQDNIVRIWALKNAFDYFN). Residues 559–593 (EGRVSPSPSQESLSSSKSDTDMGVCSGTDEDPDDK) form a disordered region. Phosphoserine is present on residues Ser-563 and Ser-567. A compositionally biased stretch (low complexity) spans 563–575 (SPSPSQESLSSSK). WD repeat units lie at residues 607 to 645 (GHTA…CLCC), 647 to 687 (QHID…VALW), 692 to 731 (GQTK…YHTQ), 742 to 781 (KVGR…LSMK), 786 to 825 (VNSS…SKFT), 840 to 880 (AHNA…EVLD), and 882 to 915 (TSTG…KTVS).

As to quaternary structure, interacts with the GTP-bound form of RAB11 when membrane-associated. Interacts with GRAF1/ARHGAP26 or GRAF2/ARHGAP10; the interaction connects the endoplasmic reticulum (ER) with the endosomal tubule. Interacts (via FFAT-like motif) with VAPA (via MSP domain) or VAPB (via MSP domain); the interaction connects the ER with the endosomal tubule. Does not bind to other Rab and Rho small G proteins. In terms of processing, phosphorylated by ATK1; the phosphorylation stabilizes its interaction with RAB11A and RAB11B.

It is found in the cytoplasm. It localises to the cytosol. The protein localises to the perinuclear region. The protein resides in the endosome membrane. Its subcellular location is the golgi apparatus. It is found in the trans-Golgi network. Functionally, downstream effector for Rab11 which regulates Rab11 intracellular membrane trafficking functions such as endocytic recycling, intracellular ciliogenesis and protein export. ATK1-mediated phosphorylation of WDR44 induces binding to Rab11 which activates endocytic recycling of transferrin receptor back to the plasma membrane. When bound to Rab11, prevents the formation of the ciliogenic Rab11-Rabin8/RAB3IP-RAB11FIP3 complex, therefore inhibiting preciliary trafficking and ciliogenesis. Participates in neo-synthesized protein export by connecting the endoplasmic reticulum (ER) with the endosomal tubule via direct interactions with the integral ER proteins VAPA or VAPB and the endosomal protein GRAFs (GRAF1/ARHGAP26 or GRAF2/ARHGAP10), which facilitates the transfer of proteins such as E-cadherin, MPP14 and CFTR into a Rab8-Rab10-Rab11-dependent export route. This chain is WD repeat-containing protein 44, found in Mus musculus (Mouse).